The primary structure comprises 456 residues: Carnosine N-methyltransferase unmet (456 aa).

6 residues coordinate S-adenosyl-L-methionine: Arg154, Gly195, Glu216, Asp282, Phe283, and Cys299. Residues Asp303, His334, and Tyr385 each contribute to the carnosine site. Residues 402–418 (RGKRKASREPHDLIVRE) show a composition bias toward basic and acidic residues. The interval 402–456 (RGKRKASREPHDLIVREDSEEEGEQQPERNETEEKQQLKPLATANCETEIKEQPS) is disordered. A phosphoserine mark is found at Ser408 and Ser420. The span at 427–438 (QPERNETEEKQQ) shows a compositional bias: basic and acidic residues.

The protein belongs to the carnosine N-methyltransferase family. Associates with the GATOR2 complex; the interaction is probably direct and is inhibited by S-adenosyl-L-methionine binding. Associates with the GATOR1 complex; the interaction is probably indirect and mediated by the GATOR2 complex.

It carries out the reaction carnosine + S-adenosyl-L-methionine = anserine + S-adenosyl-L-homocysteine + H(+). S-adenosyl-L-methionine-binding protein that acts as a sensor to signal methionine availability to the mTORC1 signaling pathway. Associates with the GATOR2 complex in the absence of methionine to inhibit mTORC1 signaling, but dissociates in the presence of the methionine derivative S-adenosyl-L-methionine; S-adenosyl-L-homocysteine binding does not induce dissociation. Required for mTORC1 pathway response to methionine starvation. Exerts a protective function on developing egg chambers by inhibiting mTORC1 signaling under starvation conditions. May also function as a N-methyltransferase that mediates the formation of anserine (beta-alanyl-N(Pi)-methyl-L-histidine) from carnosine. It is unclear whether this protein has retained N-methyltransferase activity or if it is an evolutionary intermediate whose substrate binding ability has been co-opted to function as a nutrient sensor for mTORC1 signaling. The polypeptide is Carnosine N-methyltransferase unmet (Drosophila melanogaster (Fruit fly)).